A 305-amino-acid polypeptide reads, in one-letter code: tRNA pseudouridine synthase B (305 aa).

Residue Asp-41 is the Nucleophile of the active site.

The protein belongs to the pseudouridine synthase TruB family. Type 1 subfamily.

It catalyses the reaction uridine(55) in tRNA = pseudouridine(55) in tRNA. Functionally, responsible for synthesis of pseudouridine from uracil-55 in the psi GC loop of transfer RNAs. In Prochlorococcus marinus (strain MIT 9301), this protein is tRNA pseudouridine synthase B.